The primary structure comprises 567 residues: PCNA-interacting partner (567 aa).

Residues isoleucine 485 to asparagine 552 form a disordered region. Composition is skewed to polar residues over residues aspartate 512 to glutamate 524 and leucine 534 to asparagine 552.

Belongs to the PARI family.

The protein resides in the cytoplasm. Its subcellular location is the nucleus. Functionally, required to suppress inappropriate homologous recombination, thereby playing a central role DNA repair and in the maintenance of genomic stability. The chain is PCNA-interacting partner (parpbp) from Xenopus laevis (African clawed frog).